The following is a 223-amino-acid chain: Phosphoribosylformylglycinamidine synthase subunit PurQ (223 aa).

A Glutamine amidotransferase type-1 domain is found at 3–223 (SAVVQLPGLN…FASALDVIAA (221 aa)). The active-site Nucleophile is cysteine 86. Catalysis depends on residues histidine 196 and glutamate 198.

Part of the FGAM synthase complex composed of 1 PurL, 1 PurQ and 2 PurS subunits.

The protein localises to the cytoplasm. The catalysed reaction is N(2)-formyl-N(1)-(5-phospho-beta-D-ribosyl)glycinamide + L-glutamine + ATP + H2O = 2-formamido-N(1)-(5-O-phospho-beta-D-ribosyl)acetamidine + L-glutamate + ADP + phosphate + H(+). It catalyses the reaction L-glutamine + H2O = L-glutamate + NH4(+). Its pathway is purine metabolism; IMP biosynthesis via de novo pathway; 5-amino-1-(5-phospho-D-ribosyl)imidazole from N(2)-formyl-N(1)-(5-phospho-D-ribosyl)glycinamide: step 1/2. In terms of biological role, part of the phosphoribosylformylglycinamidine synthase complex involved in the purines biosynthetic pathway. Catalyzes the ATP-dependent conversion of formylglycinamide ribonucleotide (FGAR) and glutamine to yield formylglycinamidine ribonucleotide (FGAM) and glutamate. The FGAM synthase complex is composed of three subunits. PurQ produces an ammonia molecule by converting glutamine to glutamate. PurL transfers the ammonia molecule to FGAR to form FGAM in an ATP-dependent manner. PurS interacts with PurQ and PurL and is thought to assist in the transfer of the ammonia molecule from PurQ to PurL. The sequence is that of Phosphoribosylformylglycinamidine synthase subunit PurQ from Rhizobium meliloti (strain 1021) (Ensifer meliloti).